A 107-amino-acid polypeptide reads, in one-letter code: UPF0060 membrane protein A1S_1909 (107 aa).

Helical transmembrane passes span 2–22 (FGLFIITAIAEILGCYFPYLI), 28–48 (SAWLWLPTALSLAVFVWLLTL), 56–76 (IYAAYGGIYIFTALMWLRFVD), and 85–105 (ILGGVIVLCGAGLIILQPQGL).

The protein belongs to the UPF0060 family.

It is found in the cell inner membrane. In Acinetobacter baumannii (strain ATCC 17978 / DSM 105126 / CIP 53.77 / LMG 1025 / NCDC KC755 / 5377), this protein is UPF0060 membrane protein A1S_1909.